The primary structure comprises 328 residues: Biotin synthase (328 aa).

The Radical SAM core domain occupies 50–277 (FGDQVHLCCI…GKEIVICGGR (228 aa)). [4Fe-4S] cluster-binding residues include Cys67, Cys71, and Cys74. Residues Ser111, Cys142, and Cys202 each coordinate [2Fe-2S] cluster.

The protein belongs to the radical SAM superfamily. Biotin synthase family. In terms of assembly, homodimer. It depends on [4Fe-4S] cluster as a cofactor. The cofactor is [2Fe-2S] cluster.

It catalyses the reaction (4R,5S)-dethiobiotin + (sulfur carrier)-SH + 2 reduced [2Fe-2S]-[ferredoxin] + 2 S-adenosyl-L-methionine = (sulfur carrier)-H + biotin + 2 5'-deoxyadenosine + 2 L-methionine + 2 oxidized [2Fe-2S]-[ferredoxin]. Its pathway is cofactor biosynthesis; biotin biosynthesis; biotin from 7,8-diaminononanoate: step 2/2. Functionally, catalyzes the conversion of dethiobiotin (DTB) to biotin by the insertion of a sulfur atom into dethiobiotin via a radical-based mechanism. This is Biotin synthase from Desulfatibacillum aliphaticivorans.